The following is an 899-amino-acid chain: MNKHDQKKKRNKQHTDNVMGKKSKGFIKNKKNIGESGNEKKRNNNFNNIWKKKKRSGNSEKDQVDILGLLKGDSENMNDDDDNNMNDDYNNNNIKGDYNNNNIKDDDVDDDDYDDDDDDNFDENKNCNDNCSSKHKRNVPSKKEHDILELNNINFNETRKKMINYKNIFDGKFCDLKYILSESLINTLEKNEFIKMTSIQKMSIPLFFKPNDIFLKSMTGSGKTLCYAIPSIEKILNMKEKVKITRDMGIFVLVLSPTRELAIQINNLFCILTKPYPYIVASCITGGEKKKSEKNRLKKGISILTCTPGRLLDHLENTKSLKLTFLKMVILDEADKIIYLGTQDKIKLIYDMIRKIKQEEFSKVHKKKKKEENEVLDHINDTNMSDMNNISNDHSNDYEQFILDKFQMIFISATLNHAMKTLANYCLTNNTMWIEKEKKNGINGGNKNDETKQKSNDMISCMNRENSPLNIHNNDDNDDNDDNDENNGDNNNNNDDNNNNNDDNNNKNNDDDNNNTYELPEQLKQYCILIDMKQKFICLIYMLLDCIEKKKKPVVFLSNHHSVEYLQILLKNIYWPTDVNKKNIEVNKKLNEKITPVLEREDEKLLRKHLEQNILNNNYYNNNYNVGNISYKNINLEEIQNEDELNDEPGNLYNINADKHKRIYLFNNVNIYILHGNLSKEDRLGNFMDFSKTNNSILLCTDIISRGIHFDSLSVVIQYDPPQILEEYIHKVGRTARLNKQGSAYLFLLKSQKQFLNILKNKNIQLKIILGNTIINHFKKFCIPNFLKSVGKDILNFLHNHMQTIVKSNNTLMEKGTSAFLCTITSFYSTSKNLRSIFNAKDIHLGHLAYTFLLEKTPKQISKYKKEQNYINIKKQTVLSKKEKRLLKSKQFQKKQKRK.

Basic residues-rich tracts occupy residues 1–12 (MNKHDQKKKRNK) and 21–31 (KKSKGFIKNKK). The disordered stretch occupies residues 1 to 142 (MNKHDQKKKR…SKHKRNVPSK (142 aa)). Residues 76–85 (NMNDDDDNNM) show a composition bias toward acidic residues. Positions 86–102 (NDDYNNNNIKGDYNNNN) are enriched in low complexity. The span at 106 to 121 (DDVDDDDYDDDDDDNF) shows a compositional bias: acidic residues. Positions 173–201 (FCDLKYILSESLINTLEKNEFIKMTSIQK) match the Q motif motif. The Helicase ATP-binding domain occupies 204–433 (IPLFFKPNDI…NYCLTNNTMW (230 aa)). 217–224 (SMTGSGKT) contributes to the ATP binding site. Positions 332–335 (DEAD) match the DEAD box motif. Over residues 463 to 472 (NRENSPLNIH) the composition is skewed to polar residues. The interval 463-517 (NRENSPLNIHNNDDNDDNDDNDENNGDNNNNNDDNNNNNDDNNNKNNDDDNNNTY) is disordered. A compositionally biased stretch (acidic residues) spans 476 to 487 (DNDDNDDNDENN). Low complexity predominate over residues 488-503 (GDNNNNNDDNNNNNDD). Positions 593-782 (KITPVLERED…TIINHFKKFC (190 aa)) constitute a Helicase C-terminal domain.

It belongs to the DEAD box helicase family. DDX31/DBP7 subfamily.

Its subcellular location is the nucleus. It localises to the nucleolus. The catalysed reaction is ATP + H2O = ADP + phosphate + H(+). Functionally, has DNA helicase activity and may also have RNA helicase activity; the DNA helicase direction was not determined. Shows ssDNA and RNA dependent ATPase activity. The sequence is that of ATP-dependent DNA helicase DDX31 (DDX31) from Plasmodium falciparum (isolate 3D7).